A 483-amino-acid chain; its full sequence is UDP-N-acetylmuramoylalanine--D-glutamate ligase (483 aa).

119–125 (GTNGKTT) contacts ATP.

This sequence belongs to the MurCDEF family.

The protein resides in the cytoplasm. It catalyses the reaction UDP-N-acetyl-alpha-D-muramoyl-L-alanine + D-glutamate + ATP = UDP-N-acetyl-alpha-D-muramoyl-L-alanyl-D-glutamate + ADP + phosphate + H(+). It functions in the pathway cell wall biogenesis; peptidoglycan biosynthesis. Cell wall formation. Catalyzes the addition of glutamate to the nucleotide precursor UDP-N-acetylmuramoyl-L-alanine (UMA). This is UDP-N-acetylmuramoylalanine--D-glutamate ligase from Mycolicibacterium vanbaalenii (strain DSM 7251 / JCM 13017 / BCRC 16820 / KCTC 9966 / NRRL B-24157 / PYR-1) (Mycobacterium vanbaalenii).